A 61-amino-acid polypeptide reads, in one-letter code: MDVEVANMAAKLRVRGLKLPNAIVVSTAILSDSVLITKDRGIRYEGLEILTPEEFVEKYLM.

Residues 1-30 (MDVEVANMAAKLRVRGLKLPNAIVVSTAIL) form the signal peptide.

This is an uncharacterized protein from Archaeoglobus fulgidus (strain ATCC 49558 / DSM 4304 / JCM 9628 / NBRC 100126 / VC-16).